The sequence spans 257 residues: uncharacterized protein (257 aa).

A Phosphoserine modification is found at Ser-127. Disordered stretches follow at residues His-146 to Gly-174 and Ala-210 to Lys-231. Positions Pro-151–Ser-160 are enriched in polar residues. The stretch at His-196–Thr-257 forms a coiled coil.

This is an uncharacterized protein from Arabidopsis thaliana (Mouse-ear cress).